A 392-amino-acid chain; its full sequence is Putative nickel insertion protein (392 aa).

It belongs to the LarC family.

This is Putative nickel insertion protein from Pelobacter propionicus (strain DSM 2379 / NBRC 103807 / OttBd1).